A 69-amino-acid chain; its full sequence is U-Asilidin(12)-Dg3a (69 aa).

Positions 1-19 (MRFLNIFLFFAAIIAFATA) are cleaved as a signal peptide. Residues 20-33 (SQVFEEDEIDMEPR) constitute a propeptide that is removed on maturation. 3 disulfides stabilise this stretch: cysteine 36-cysteine 59, cysteine 45-cysteine 65, and cysteine 49-cysteine 67.

This sequence belongs to the asilidin-12 family. As to expression, expressed by the venom gland.

The protein localises to the secreted. Its function is as follows. Moderately increases Kv11.1/KCNH2/ERG1 currents and shifts the voltage-dependence of the channel activation to hyperpolarised potentials. In vivo, induces neurotoxic effects when injected into insects (tested on L.cuprina and A.domesticus). The polypeptide is U-Asilidin(12)-Dg3a (Dolopus genitalis (Giant Australian assassin fly)).